A 732-amino-acid chain; its full sequence is Polyribonucleotide nucleotidyltransferase (732 aa).

Positions 502 and 508 each coordinate Mg(2+). One can recognise a KH domain in the interval 569–628 (PRLTSIQIPVDAIGMVIGKGGETIRSITEETGAEINIDDDGTVTIACSSPEGTKAAVETI). In terms of domain architecture, S1 motif spans 638–712 (GTIYMGKVRD…GKTKFALSIK (75 aa)).

The protein belongs to the polyribonucleotide nucleotidyltransferase family. The cofactor is Mg(2+).

Its subcellular location is the cytoplasm. It carries out the reaction RNA(n+1) + phosphate = RNA(n) + a ribonucleoside 5'-diphosphate. In terms of biological role, involved in mRNA degradation. Catalyzes the phosphorolysis of single-stranded polyribonucleotides processively in the 3'- to 5'-direction. In Chlorobaculum parvum (strain DSM 263 / NCIMB 8327) (Chlorobium vibrioforme subsp. thiosulfatophilum), this protein is Polyribonucleotide nucleotidyltransferase.